Reading from the N-terminus, the 323-residue chain is MADLDKLNIDSIIQRLLEVRGSKPGKNVQLQENEIRGLCLKSREIFLSQPILLELEAPLKICGDIHGQYYDLLRLFEYGGFPPESNYLFLGDYVDRGKQSLETICLLLAYKIKYPENFFLLRGNHECASINRIYGFYDECKRRYNIKLWKTFTDCFNCLPIAAIVDEKIFCCHGGLSPDLQSMEQIRRIMRPTDVPDQGLLCDLLWSDPDKDVLGWGENDRGVSFTFGAEVVAKFLHKHDLDLICRAHQVVEDGYEFFAKRQLVTLFSAPNYCGEFDNAGAMMSVDETLMCSFQILKPAEKKKPNATRPVTPPRGMITKQAKK.

N-acetylalanine is present on Ala-2. Residues Asp-64, His-66, Asp-92, and Asn-124 each coordinate Mn(2+). The Proton donor role is filled by His-125. The Mn(2+) site is built by His-173 and His-248. Positions 302–323 (KKPNATRPVTPPRGMITKQAKK) are disordered. 2 positions are modified to phosphothreonine: Thr-307 and Thr-311.

Belongs to the PPP phosphatase family. PP-1 subfamily. PP1 comprises a catalytic subunit, PPP1CA, PPP1CB or PPP1CC, which is folded into its native form by inhibitor 2 and glycogen synthetase kinase 3, and then complexed to one or several targeting or regulatory subunits. PPP1R12A, PPP1R12B and PPP1R12C mediate binding to myosin. PPP1R3A (in skeletal muscle), PPP1R3B (in liver), PPP1R3C, PPP1R3D and PPP1R3F (in brain) mediate binding to glycogen. Interacts with cyanobacterial toxin microcystin; disulfide-linked. Interacts with PPP1R3B and PPP1R7. Isoform 2 interacts with SPZ1. Interacts with CDCA2. PPP1R15A and PPP1R15B mediate binding to EIF2S1. Part of a complex containing PPP1R15B, PP1 and NCK1/2. Interacts with IKFZ1; the interaction targets PPP1CC to pericentromeric heterochromatin, dephosphorylates IKAROS, stabilizes it and prevents it from degradation. Interacts with PPP1R42; the interaction is direct. Interacts with NOM1 and PPP1R8. Component of the PTW/PP1 phosphatase complex, composed of PPP1R10/PNUTS, TOX4, WDR82, and PPP1CA or PPP1CB or PPP1CC. Interacts with PPP1R8. Interacts with isoform 1 and isoform 4 NEK2. Interacts with URI1; the interaction is phosphorylation-dependent and occurs in a growth factor-dependent manner. Interacts with FOXP3. Interacts with TMEM225 (via RVxF motif). Interacts with MKI67. Interacts with RRP1B; this targets PPP1CC to the nucleolus. Interacts with PPP1R2B. Found in a complex with PPP1CA, PPP1CC, SHC1 and PEAK1. Interacts with DYNLT4. Interacts (via RVxF motif) with FIRRM; regulates PLK1 kinase activity. Interacts with the KNL1 complex subunit KNL1; the interaction is direct and mutually exclusive with KNL1 binding to microtubules. Component of the SHOC2-MRAS-PP1c (SMP) complex consisting of SHOC2, GTP-bound M-Ras/MRAS and the catalytic subunit of protein phosphatase 1 (either PPP1CA, PPP1CB or PPP1CC). SHOC2 and PP1c preferably bind M-Ras/MRAS, but they also bind K-Ras/KRAS, N-Ras/NRAS and H-Ras/HRAS; these interactions are GTP-dependent and both SHOC2 and PP1c are required to form a stable complex. Interacts with SHOC2 in the absence of Ras GTPases. The cofactor is Mn(2+). In terms of processing, phosphorylated by NEK2.

It is found in the cytoplasm. Its subcellular location is the nucleus. The protein localises to the nucleolus. The protein resides in the nucleoplasm. It localises to the nucleus speckle. It is found in the chromosome. Its subcellular location is the centromere. The protein localises to the kinetochore. The protein resides in the cleavage furrow. It localises to the midbody. It is found in the mitochondrion. Its subcellular location is the cytoskeleton. The protein localises to the microtubule organizing center. It carries out the reaction O-phospho-L-seryl-[protein] + H2O = L-seryl-[protein] + phosphate. It catalyses the reaction O-phospho-L-threonyl-[protein] + H2O = L-threonyl-[protein] + phosphate. With respect to regulation, inactivated by binding to URI1. The phosphatase activity of the PPP1R15A-PP1 complex toward EIF2S1 is specifically inhibited by Salubrinal, a drug that protects cells from endoplasmic reticulum stress. In terms of biological role, protein phosphatase that associates with over 200 regulatory proteins to form highly specific holoenzymes which dephosphorylate hundreds of biological targets. Protein phosphatase 1 (PP1) is essential for cell division, and participates in the regulation of glycogen metabolism, muscle contractility and protein synthesis. Dephosphorylates RPS6KB1. Involved in regulation of ionic conductances and long-term synaptic plasticity. May play an important role in dephosphorylating substrates such as the postsynaptic density-associated Ca(2+)/calmodulin dependent protein kinase II. Component of the PTW/PP1 phosphatase complex, which plays a role in the control of chromatin structure and cell cycle progression during the transition from mitosis into interphase. In balance with CSNK1D and CSNK1E, determines the circadian period length, through the regulation of the speed and rhythmicity of PER1 and PER2 phosphorylation. May dephosphorylate CSNK1D and CSNK1E. Regulates the recruitment of the SKA complex to kinetochores. Dephosphorylates the 'Ser-418' residue of FOXP3 in regulatory T-cells (Treg) from patients with rheumatoid arthritis, thereby inactivating FOXP3 and rendering Treg cells functionally defective. Together with PPP1CA (PP1-alpha subunit), dephosphorylates IFIH1/MDA5 and RIG-I leading to their activation and a functional innate immune response. Core component of the SHOC2-MRAS-PP1c (SMP) holophosphatase complex that regulates the MAPK pathway activation. The SMP complex specifically dephosphorylates the inhibitory phosphorylation at 'Ser-259' of RAF1 kinase, 'Ser-365' of BRAF kinase and 'Ser-214' of ARAF kinase, stimulating their kinase activities. Dephosphorylates MKI67 at the onset of anaphase. The SMP complex enhances the dephosphorylation activity and substrate specificity of PP1c. The sequence is that of Serine/threonine-protein phosphatase PP1-gamma catalytic subunit (PPP1CC) from Homo sapiens (Human).